Here is a 527-residue protein sequence, read N- to C-terminus: Probable pectinesterase/pectinesterase inhibitor 32 (527 aa).

An N-terminal signal peptide occupies residues 1–24 (MAKFRQMGSSIFFLFLIIISLCSA). A pectinesterase inhibitor 32 region spans residues 25–165 (HKEAFSSTDL…GTTVRNLLTM (141 aa)). 4 N-linked (GlcNAc...) asparagine glycosylation sites follow: asparagine 110, asparagine 209, asparagine 224, and asparagine 280. The interval 214-511 (DAVVAADGTG…FTVSQLIQGN (298 aa)) is pectinesterase 32. The substrate site is built by threonine 289 and glutamine 319. Aspartate 342 serves as the catalytic Proton donor; for pectinesterase activity. A disulfide bridge links cysteine 356 with cysteine 376. The Nucleophile; for pectinesterase activity role is filled by aspartate 363. An N-linked (GlcNAc...) asparagine glycan is attached at asparagine 423. Substrate-binding residues include arginine 431 and tryptophan 433. Asparagine 494 and asparagine 501 each carry an N-linked (GlcNAc...) asparagine glycan.

This sequence in the N-terminal section; belongs to the PMEI family. It in the C-terminal section; belongs to the pectinesterase family. In terms of tissue distribution, expressed in siliques.

It is found in the secreted. Its subcellular location is the cell wall. It carries out the reaction [(1-&gt;4)-alpha-D-galacturonosyl methyl ester](n) + n H2O = [(1-&gt;4)-alpha-D-galacturonosyl](n) + n methanol + n H(+). The protein operates within glycan metabolism; pectin degradation; 2-dehydro-3-deoxy-D-gluconate from pectin: step 1/5. Acts in the modification of cell walls via demethylesterification of cell wall pectin. The polypeptide is Probable pectinesterase/pectinesterase inhibitor 32 (PME32) (Arabidopsis thaliana (Mouse-ear cress)).